We begin with the raw amino-acid sequence, 98 residues long: NADH-ubiquinone oxidoreductase chain 4L (98 aa).

3 consecutive transmembrane segments (helical) span residues M1–M21, S29–L49, and I61–V81.

The protein belongs to the complex I subunit 4L family. Core subunit of respiratory chain NADH dehydrogenase (Complex I) which is composed of 45 different subunits.

The protein resides in the mitochondrion inner membrane. The enzyme catalyses a ubiquinone + NADH + 5 H(+)(in) = a ubiquinol + NAD(+) + 4 H(+)(out). Core subunit of the mitochondrial membrane respiratory chain NADH dehydrogenase (Complex I) which catalyzes electron transfer from NADH through the respiratory chain, using ubiquinone as an electron acceptor. Part of the enzyme membrane arm which is embedded in the lipid bilayer and involved in proton translocation. The chain is NADH-ubiquinone oxidoreductase chain 4L (MT-ND4L) from Otaria byronia (South American sea lion).